Reading from the N-terminus, the 150-residue chain is C-type natriuretic peptide (150 aa).

A signal peptide spans 1–31; sequence MSISSSSSSSSSSSSCLLLISLMLLAASCQG. Positions 32 to 127 are excised as a propeptide; that stretch reads RPDLQHRNHK…RKMFRGRTKK (96 aa). A compositionally biased stretch (low complexity) spans 60 to 73; the sequence is GAADGSSGEEAALS. Residues 60 to 109 are disordered; that stretch reads GAADGSSGEEAALSQRAPPSIRALHPRSGRLGLRDDLEAEPPAENKPRRR. A disulfide bridge connects residues C134 and C150.

This sequence belongs to the natriuretic peptide family. As to expression, expressed in brain, but not in atrium or ventricle.

Its subcellular location is the secreted. Its function is as follows. Hormone which plays a role in endochondral ossification through regulation of cartilaginous growth plate chondrocytes proliferation and differentiation. May also be vasoactive and natriuretic. This is C-type natriuretic peptide (cnp) from Acipenser transmontanus (White sturgeon).